The following is a 323-amino-acid chain: Fructokinase-1 (323 aa).

It belongs to the carbohydrate kinase PfkB family. In terms of tissue distribution, expressed in root, endosperm and leaf tissues.

The catalysed reaction is D-fructose + ATP = D-fructose 6-phosphate + ADP + H(+). It functions in the pathway glycan biosynthesis; starch biosynthesis. Completely inhibited at 50 mM ATP, but not inhibited at high fructose concentration. Its function is as follows. Fructokinase that may play an important role in maintaining the flux of carbon towards starch formation. May also be involved in a sugar-sensing pathway. In Oryza sativa subsp. japonica (Rice), this protein is Fructokinase-1.